The primary structure comprises 547 residues: Chaperonin GroEL 2 (547 aa).

ATP-binding positions include 30–33 (TLGP), Lys-51, 87–91 (DGTTT), Gly-415, 479–481 (NAA), and Asp-495. Residues 526 to 547 (KEESAAPAGGGMGGMGGMGGMM) form a disordered region. Gly residues predominate over residues 533-547 (AGGGMGGMGGMGGMM).

The protein belongs to the chaperonin (HSP60) family. In terms of assembly, forms a cylinder of 14 subunits composed of two heptameric rings stacked back-to-back. Interacts with the co-chaperonin GroES.

It localises to the cytoplasm. The catalysed reaction is ATP + H2O + a folded polypeptide = ADP + phosphate + an unfolded polypeptide.. Its function is as follows. Together with its co-chaperonin GroES, plays an essential role in assisting protein folding. The GroEL-GroES system forms a nano-cage that allows encapsulation of the non-native substrate proteins and provides a physical environment optimized to promote and accelerate protein folding. In Anaeromyxobacter sp. (strain Fw109-5), this protein is Chaperonin GroEL 2.